Consider the following 309-residue polypeptide: MKIVFMGTPDFAVPSFRKLIEEHEVKAVLTQPDKPKGRGKKLAYSPVKEEALKYDIPVYQPTKLKDDKEIIEKLKEINPDFIIVVAFGQILTKEVLDIPKYGCINLHASLLPMYRGAAPLNWVIIKGEKKSGNTTMLMDVGLDTGDMLLKEEVEIHEDMTTGELHDILMISGGELLLKTIEGLCSGSIKPVKQEGETFYAKMLDKELAHINWTEDAYDIHNLVRGLNPWPIAYTEYKGERMKLYKTKVLYKEVSNKPGTIIEVNKEGVKVACGKNVLIIEKVQFPNGKPLTIEQYINGHSIEKDIILGE.

109–112 (SLLP) is a binding site for (6S)-5,6,7,8-tetrahydrofolate.

The protein belongs to the Fmt family.

It catalyses the reaction L-methionyl-tRNA(fMet) + (6R)-10-formyltetrahydrofolate = N-formyl-L-methionyl-tRNA(fMet) + (6S)-5,6,7,8-tetrahydrofolate + H(+). Functionally, attaches a formyl group to the free amino group of methionyl-tRNA(fMet). The formyl group appears to play a dual role in the initiator identity of N-formylmethionyl-tRNA by promoting its recognition by IF2 and preventing the misappropriation of this tRNA by the elongation apparatus. The polypeptide is Methionyl-tRNA formyltransferase (Clostridium botulinum (strain Alaska E43 / Type E3)).